The primary structure comprises 464 residues: Glutamate decarboxylase beta (464 aa).

At Lys275 the chain carries N6-(pyridoxal phosphate)lysine.

The protein belongs to the group II decarboxylase family. Pyridoxal 5'-phosphate serves as cofactor.

It carries out the reaction L-glutamate + H(+) = 4-aminobutanoate + CO2. Converts internalized glutamate to GABA and increases the internal pH. Involved in glutamate-dependent acid resistance in gastric fluid. The sequence is that of Glutamate decarboxylase beta (gadB) from Listeria monocytogenes serovar 1/2a (strain ATCC BAA-679 / EGD-e).